Reading from the N-terminus, the 348-residue chain is Serpentine receptor class beta-7 (348 aa).

A run of 7 helical transmembrane segments spans residues 31 to 51 (QLIM…FQLL), 63 to 83 (LVGY…EAFI), 107 to 127 (GNLL…SITF), 145 to 165 (FLGP…ILLI), 191 to 211 (MFFI…FLLL), 241 to 261 (ISVI…TILL), and 280 to 300 (GAFM…SVYF).

It belongs to the nematode receptor-like protein srb family.

The protein localises to the membrane. This is Serpentine receptor class beta-7 (srb-7) from Caenorhabditis elegans.